A 703-amino-acid chain; its full sequence is Calpain-8 (703 aa).

Residues 45–344 (LFKDPEFPAC…FSRLEICNLS (300 aa)) enclose the Calpain catalytic domain. Active-site residues include Cys105, His262, and Asn286. Residues 356 to 379 (WNLVLFNGHWTRGSTAGGCQNYPA) are domain III. 3 consecutive EF-hand domains span residues 575 to 610 (FNINTCREMISLLDSNGTGTLGAVEFKTLWLKIQKY), 618 to 640 (DYNHSGTIDAHEMRTALRKAGFT), and 670 to 703 (IRLETLFKLFSLLDEDKDGMVQLSLAEWLCCVLV). Ca(2+) is bound by residues Asp588, Asn590, Thr592, Thr594, Glu599, Asp618, Asn620, Ser622, Thr624, and Glu629.

Belongs to the peptidase C2 family. As to quaternary structure, monomer and homooligomer. Interacts with COPS1/GPS1, COPB1, EYA2, NME2, NME4 and TOMM70. Ca(2+) serves as cofactor. Undergoes autolytic cleavage between Ala-5 and Ala-6 which gives rise to fragments extending from Ala-6 to the C-terminus, Ala-6 to the EF-hand 2 domain and from Ala-6 to the beginning of domain III. As to expression, stomach.

The protein resides in the cytoplasm. Its subcellular location is the golgi apparatus. The enzyme catalyses Broad endopeptidase specificity.. In terms of biological role, calcium-regulated non-lysosomal thiol-protease. Involved in membrane trafficking in the gastric surface mucus cells (pit cells) and may involve the membrane trafficking of mucus cells via interactions with coat protein. Proteolytically cleaves the beta-subunit of coatomer complex. In Homo sapiens (Human), this protein is Calpain-8 (CAPN8).